Consider the following 2159-residue polypeptide: Calpain-type cysteine protease DEK1 (2159 aa).

The N-terminal stretch at 1–33 (MEGEGHHGVVLACSICGFLFAVLSPFSFWVLWA) is a signal peptide. Over 34 to 70 (VNWRPWRLYSWIYARKWPTYVQGPQLSTLCSLLTLCA) the chain is Extracellular. The helical transmembrane segment at 71–91 (WLVVISPIAVLLVWGSVLIAL) threads the bilayer. Topologically, residues 92–95 (MERN) are cytoplasmic. The chain crosses the membrane as a helical span at residues 96–116 (IIGLAVIMAGVALLLSFYSIM). The Extracellular segment spans residues 117–127 (LWWRTQWQSSE). Residues 128–148 (AVAYLLLLAVCLLCAYDFCAI) traverse the membrane as a helical segment. Over 149–164 (YVTAGASASELNSPSG) the chain is Cytoplasmic. Residues 165–185 (FFFGVSVISLAINMLFICKIL) form a helical membrane-spanning segment. At 186–236 (FNVSGFDVDEYVRRSYKFAYSDCVEVAPVSCSPEPPDPSELYMTKSSRVKH) the chain is on the extracellular side. The chain crosses the membrane as a helical span at residues 237–257 (LGLLYISSLLVLVGYSILYGL). Over 258–264 (TSKEARW) the chain is Cytoplasmic. The chain crosses the membrane as a helical span at residues 265–285 (LGALTSVAVVILDWNLGLCSF). Residues 286–294 (RFELLKSRM) are Extracellular-facing. Residues 295–315 (IVLFVAGTSRAFLVSFGVHYW) traverse the membrane as a helical segment. The Cytoplasmic portion of the chain corresponds to 316-320 (YLGHC). A helical membrane pass occupies residues 321–341 (ISYAFVASVLLSAAVSSWLSI). The Extracellular portion of the chain corresponds to 342–623 (SNPSVARIDA…LIFHHLAGSP (282 aa)). The segment at 365–409 (RKGQNSSSNSSEGCGSSVKRSSGSVEAGQNGNAMDSMYRSNSQSD) is disordered. Over residues 369–381 (NSSSNSSEGCGSS) the composition is skewed to low complexity. A compositionally biased stretch (polar residues) spans 382 to 409 (VKRSSGSVEAGQNGNAMDSMYRSNSQSD). Residues 624–644 (IRAFIVFTVMFIIETATVAIY) traverse the membrane as a helical segment. Residues 645 to 660 (RPETIKVINATHEQFE) lie on the Cytoplasmic side of the membrane. Residues 661–681 (FGFSILLLSPVVCSIMAFIWS) form a helical membrane-spanning segment. The Extracellular segment spans residues 682 to 694 (LRAEEMLMTSKPQ). Residues 695 to 715 (KYGFIAWLLSTCVGLFLSFLS) form a helical membrane-spanning segment. Topologically, residues 716 to 719 (KSSV) are cytoplasmic. The chain crosses the membrane as a helical span at residues 720–740 (ILGLSLTVPLMVACLSFAVPI). The Extracellular segment spans residues 741 to 770 (WIRNGYSFWIPGREFANRENVSQAPGEKER). Residues 771-791 (ALFVITIAVFTASIIGLGAIV) form a helical membrane-spanning segment. The Cytoplasmic portion of the chain corresponds to 792–822 (SAKPLDALGYKGWDADKNSSYSPYATSMYLG). The chain crosses the membrane as a helical span at residues 823-843 (WALSSTIAVITTGLIPIVAWF). Residues 844-853 (ATYRFSPSSA) are Extracellular-facing. The helical transmembrane segment at 854–874 (ICVGLFATVLVSFCGASYWGV) threads the bilayer. Over 875-887 (VNSREDGVPLKAD) the chain is Cytoplasmic. Residues 888–908 (FLAALLPLLCIPAFFSLFTGL) traverse the membrane as a helical segment. Topologically, residues 909–921 (YKWKDDDWKISRG) are extracellular. The helical transmembrane segment at 922-942 (VYLFVGMGMLLLFGAVAAVIV) threads the bilayer. Residues 943–946 (TIRP) lie on the Cytoplasmic side of the membrane. A helical transmembrane segment spans residues 947–967 (WTVGVACLVAILFLVFVIGVI). Over 968 to 981 (HYWTSNNFYLTRTQ) the chain is Extracellular. The helical transmembrane segment at 982–1002 (MLLVCSIAFLLALAAFLMGLF) threads the bilayer. Residues 1003 to 1016 (HGKPFVGASIGYFS) lie on the Cytoplasmic side of the membrane. The chain crosses the membrane as a helical span at residues 1017–1037 (FIFLLTGRALTVLLSPPIVVY). At 1038–1060 (SPRVLPVYVYDAHADSAKNVSYA) the chain is on the extracellular side. The chain crosses the membrane as a helical span at residues 1061–1081 (FLILYGIALATEVWGVIASLI). At 1082 to 2159 (MNPPFVGAGV…SKASIRLEAV (1078 aa)) the chain is on the cytoplasmic side. Phosphoserine is present on residues Ser1371 and Ser1376. The Calpain catalytic 1 domain maps to 1417–1609 (TGRHCGELDL…MSPAEYGFFD (193 aa)). Position 1665 is a phosphoserine (Ser1665). The Calpain catalytic 2 domain maps to 1703–2005 (NFTDQEFPPE…FRSIYVCRVY (303 aa)). Active-site residues include Cys1769, His1927, and Asn1947.

Belongs to the peptidase C2 family. Autocatalytic proteolytic cleavage leading to the production of mainly cytoplasmic localized subproducts of about 85 and 120 kDa. In terms of tissue distribution, expressed in most tissues at low levels ranging from 30 to 55 ppm. Present in all endosperm cells at transcript level, but confined to aleurones at protein level.

It is found in the endoplasmic reticulum membrane. Its subcellular location is the cytoplasm. The protein resides in the cell membrane. The protein localises to the endosome membrane. In terms of biological role, essential protease involved in epiderm development. Required for aleurone cell development in the endosperm probably by maintaining and restricting the aleurone and embryonic epidermal L1 cell-layer fates as well as meristems organization. Involved in the maintenance of adaxial/abaxial axis information in developing leaves, probably by regulating cell proliferation and expansion. Does not need calcium ions to be active. The sequence is that of Calpain-type cysteine protease DEK1 (DEK1) from Zea mays (Maize).